A 207-amino-acid chain; its full sequence is Large ribosomal subunit protein uL4 (207 aa).

The tract at residues 49–78 (HAVKNRSAVRGGGKKPWRQKGTGRARQGSI) is disordered. Positions 60–71 (GGKKPWRQKGTG) are enriched in basic residues.

This sequence belongs to the universal ribosomal protein uL4 family. Part of the 50S ribosomal subunit.

In terms of biological role, one of the primary rRNA binding proteins, this protein initially binds near the 5'-end of the 23S rRNA. It is important during the early stages of 50S assembly. It makes multiple contacts with different domains of the 23S rRNA in the assembled 50S subunit and ribosome. Functionally, forms part of the polypeptide exit tunnel. This chain is Large ribosomal subunit protein uL4, found in Ligilactobacillus salivarius (strain UCC118) (Lactobacillus salivarius).